A 432-amino-acid polypeptide reads, in one-letter code: Homeobox protein Hox-D3 (432 aa).

Disordered regions lie at residues 43-62 (YSTP…LDTD), 68-197 (CSIQ…SKRV), 253-280 (QKAK…AGHV), and 400-432 (HHGP…LTHL). Over residues 97 to 106 (NSQGGGGGSQ) the composition is skewed to gly residues. A compositionally biased stretch (pro residues) spans 116-131 (PPQPPPPPPTLPPSSP). The segment covering 148–158 (NASSSSATISK) has biased composition (polar residues). Residues 160-165 (IFPWMK) carry the Antp-type hexapeptide motif. Positions 194–253 (SKRVRTAYTSAQLVELEKEFHFNRYLCRPRRVEMANLLNLTERQIKIWFQNRRMKYKKDQ) form a DNA-binding region, homeobox.

This sequence belongs to the Antp homeobox family.

The protein localises to the nucleus. In terms of biological role, sequence-specific transcription factor which is part of a developmental regulatory system that provides cells with specific positional identities on the anterior-posterior axis. The polypeptide is Homeobox protein Hox-D3 (HOXD3) (Homo sapiens (Human)).